Here is a 68-residue protein sequence, read N- to C-terminus: MNGKRIQATGATLRVKQVRSVVGQKQNMRDTLRSLGLKRPGQVVERKADAATVGMINTVTHLVEVEEA.

It belongs to the universal ribosomal protein uL30 family. In terms of assembly, part of the 50S ribosomal subunit.

This chain is Large ribosomal subunit protein uL30, found in Kocuria rhizophila (strain ATCC 9341 / DSM 348 / NBRC 103217 / DC2201).